Reading from the N-terminus, the 106-residue chain is PAT complex subunit Asterix (106 aa).

The disordered stretch occupies residues 1-29 (MSTNNMSDPRRPNKVLRYKPPPSECNPAL). Ser2 is subject to N-acetylserine. The Cytoplasmic portion of the chain corresponds to 2–32 (STNNMSDPRRPNKVLRYKPPPSECNPALDDP). Residues 33–51 (TPDYMNLLGMIFSMCGLML) form a helical membrane-spanning segment. A topological domain (lumenal) is located at residue Lys52. A helical membrane pass occupies residues 53-70 (LKWCAWVAVYCSFISFAN). At 71–74 (SRSS) the chain is on the cytoplasmic side. The chain crosses the membrane as a helical span at residues 75–95 (EDTKQMMSSFMLSISAVVMSY). At 96–106 (LQNPQPMTPPW) the chain is on the lumenal side.

The protein belongs to the Asterix family. Component of the PAT complex, composed of WDR83OS/Asterix and CCDC47. The PAT complex is part of the multi-pass translocon (MPT) complex, composed of three subcomplexes, the GEL complex (composed of RAB5IF/OPTI and TMCO1), the BOS complex (composed of NCLN/Nicalin, NOMO1 and TMEM147) and the PAT complex (composed of WDR83OS/Asterix and CCDC47). The MPT complex associates with the SEC61 complex.

The protein resides in the endoplasmic reticulum membrane. In terms of biological role, component of the multi-pass translocon (MPT) complex that mediates insertion of multi-pass membrane proteins into the lipid bilayer of membranes. The MPT complex takes over after the SEC61 complex: following membrane insertion of the first few transmembrane segments of proteins by the SEC61 complex, the MPT complex occludes the lateral gate of the SEC61 complex to promote insertion of subsequent transmembrane regions. Within the MPT complex, the PAT subcomplex sequesters any highly polar regions in the transmembrane domains away from the non-polar membrane environment until they can be buried in the interior of the fully assembled protein. Within the PAT subcomplex, WDR83OS/Asterix binds to and redirects the substrate to a location behind the SEC61 complex. This Canis lupus familiaris (Dog) protein is PAT complex subunit Asterix (WDR83OS).